Reading from the N-terminus, the 338-residue chain is Methionine import ATP-binding protein MetN 1 (338 aa).

The ABC transporter domain occupies Ile-2–Val-241. Residue Gly-38–Ser-45 participates in ATP binding.

Belongs to the ABC transporter superfamily. Methionine importer (TC 3.A.1.24) family. In terms of assembly, the complex is composed of two ATP-binding proteins (MetN), two transmembrane proteins (MetI) and a solute-binding protein (MetQ).

It is found in the cell membrane. The enzyme catalyses L-methionine(out) + ATP + H2O = L-methionine(in) + ADP + phosphate + H(+). It catalyses the reaction D-methionine(out) + ATP + H2O = D-methionine(in) + ADP + phosphate + H(+). In terms of biological role, part of the ABC transporter complex MetNIQ involved in methionine import. Responsible for energy coupling to the transport system. This is Methionine import ATP-binding protein MetN 1 from Listeria monocytogenes serotype 4b (strain F2365).